Here is a 367-residue protein sequence, read N- to C-terminus: Cis-3-hydroxy-L-proline dehydratase (367 aa).

Lysine 165 acts as the Proton donor/acceptor in catalysis. Mg(2+)-binding residues include aspartate 193, glutamate 218, and aspartate 241. The Proton donor/acceptor role is filled by lysine 265.

It belongs to the mandelate racemase/muconate lactonizing enzyme family. Mg(2+) serves as cofactor.

It catalyses the reaction cis-3-hydroxy-L-proline = 1-pyrroline-2-carboxylate + H2O. In terms of biological role, catalyzes the dehydration of cis-3-hydroxy-L-proline (c3LHyp) to Delta(1)-pyrroline-2-carboxylate (Pyr2C). Is likely involved in a degradation pathway that converts c3LHyp to L-proline, which allows L.aggregata to grow on c3LHyp as a sole carbon source. Also catalyzes the epimerization of c3LHyp to trans-3-hydroxy-D-proline (t3DHyp), a competing reaction occurring from the same enolate anion intermediate. L-proline, t3LHyp, t4LHyp, c4DHyp and their methylated derivatives are not substrates. This Roseibium aggregatum (strain ATCC 25650 / DSM 13394 / JCM 20685 / NBRC 16684 / NCIMB 2208 / IAM 12614 / B1) (Stappia aggregata) protein is Cis-3-hydroxy-L-proline dehydratase.